Here is a 217-residue protein sequence, read N- to C-terminus: 25 kDa ookinete surface antigen (217 aa).

The N-terminal stretch at 1–16 (MNKLYSLFLFLFIQLS) is a signal peptide. Positions 30 to 59 (CKKGFLIQMSGHLECKCENDLVLVNEETCE) constitute an EGF-like 1; truncated domain. EGF-like domains follow at residues 61-106 (KVLK…NVCI), 106-150 (ILNE…NKCS), and 153-193 (GETK…STCT). Disulfide bonds link Cys-65–Cys-80, Cys-74–Cys-92, Cys-94–Cys-105, Cys-110–Cys-120, Cys-115–Cys-133, Cys-135–Cys-149, Cys-157–Cys-168, Cys-161–Cys-177, and Cys-179–Cys-192. Asn-112 is a glycosylation site (N-linked (GlcNAc...) asparagine). Residues Asn-165 and Asn-187 are each glycosylated (N-linked (GlcNAc...) asparagine). Ser-196 is lipidated: GPI-anchor amidated serine. A propeptide spans 197 to 217 (VYNILNLSLIFVLFSVCFFIM) (removed in mature form). Residue Asn-202 is glycosylated (N-linked (GlcNAc...) asparagine).

It is found in the cell membrane. This Plasmodium reichenowi protein is 25 kDa ookinete surface antigen.